Consider the following 314-residue polypeptide: Melanoma-associated antigen 12 (314 aa).

The segment covering 1-14 (MPLEQRSQHCKPEE) has biased composition (basic and acidic residues). The disordered stretch occupies residues 1-72 (MPLEQRSQHC…HSPQGASTLP (72 aa)). A compositionally biased stretch (low complexity) spans 17–44 (EAQGEALGLVGAQAPATEEQETASSSST). The 200-residue stretch at 109 to 308 (LSRKMAELVH…ISYPPLHEWA (200 aa)) folds into the MAGE domain.

In terms of tissue distribution, expressed in many tumors of several types, such as melanoma, head and neck squamous cell carcinoma, lung carcinoma and breast carcinoma, but not in normal tissues except for testes.

Functionally, not known, though may play a role tumor transformation or progression. In vitro promotes cell viability in melanoma cell lines. The chain is Melanoma-associated antigen 12 (MAGEA12) from Homo sapiens (Human).